The chain runs to 339 residues: Uroporphyrinogen decarboxylase (339 aa).

Residues R23–R27, D72, Y147, T202, and H315 each bind substrate.

It belongs to the uroporphyrinogen decarboxylase family. In terms of assembly, homodimer.

It localises to the cytoplasm. The enzyme catalyses uroporphyrinogen III + 4 H(+) = coproporphyrinogen III + 4 CO2. It participates in porphyrin-containing compound metabolism; protoporphyrin-IX biosynthesis; coproporphyrinogen-III from 5-aminolevulinate: step 4/4. In terms of biological role, catalyzes the decarboxylation of four acetate groups of uroporphyrinogen-III to yield coproporphyrinogen-III. This Geobacter sp. (strain M21) protein is Uroporphyrinogen decarboxylase.